The chain runs to 259 residues: Flagellar L-ring protein 1 (259 aa).

An N-terminal signal peptide occupies residues Met-1 to Gly-15. The N-palmitoyl cysteine moiety is linked to residue Cys-16. A lipid anchor (S-diacylglycerol cysteine) is attached at Cys-16. A disordered region spans residues Glu-38 to Asp-63.

This sequence belongs to the FlgH family. In terms of assembly, the basal body constitutes a major portion of the flagellar organelle and consists of four rings (L,P,S, and M) mounted on a central rod.

The protein resides in the cell outer membrane. It localises to the bacterial flagellum basal body. Functionally, assembles around the rod to form the L-ring and probably protects the motor/basal body from shearing forces during rotation. The sequence is that of Flagellar L-ring protein 1 (flgH1) from Vibrio parahaemolyticus serotype O3:K6 (strain RIMD 2210633).